We begin with the raw amino-acid sequence, 412 residues long: CinA-like protein (412 aa).

Belongs to the CinA family.

In Kosmotoga olearia (strain ATCC BAA-1733 / DSM 21960 / TBF 19.5.1), this protein is CinA-like protein.